Consider the following 886-residue polypeptide: Linoleate 9S-lipoxygenase 5 (886 aa).

Residues 35 to 180 (IEGEVVVMKK…RYRSDRVFFS (146 aa)) form the PLAT domain. The region spanning 183-886 (AYLPSETPEL…GKGIPNSVSI (704 aa)) is the Lipoxygenase domain. Residues 234–266 (GPDSVRPVLGGSPELPYPRRGKTGRKSTKSDPK) form a disordered region. 5 residues coordinate Fe cation: His542, His547, His733, Asn737, and Ile886.

The protein belongs to the lipoxygenase family. It depends on Fe cation as a cofactor. As to expression, expressed in roots.

It catalyses the reaction (9Z,12Z)-octadecadienoate + O2 = (9S)-hydroperoxy-(10E,12Z)-octadecadienoate. It carries out the reaction (9Z,12Z,15Z)-octadecatrienoate + O2 = (9S)-hydroperoxy-(10E,12Z,15Z)-octadecatrienoate. It functions in the pathway lipid metabolism; oxylipin biosynthesis. 9S-lipoxygenase that can use linoleic acid or linolenic acid as substrates. Plant lipoxygenases may be involved in a number of diverse aspects of plant physiology including growth and development, pest resistance, and senescence or responses to wounding. Catalyzes the hydroperoxidation of lipids containing a cis,cis-1,4-pentadiene structure. Function as regulators of root development by controlling the emergence of lateral roots. 9S-lypoxygenase-derived oxylipins may play an antagonistic role to ethylene signaling in the control of responses involving oxidative stress, lipid peroxidation and plant defense. LOX5-derived oxylipins may facilitate performance of green peach aphid (Myzus persicae) on foliage. 9S-lypoxygenase-derived oxylipins are engaged during infection to control the balance between salicylic acid (SA) and jasmonate (JA) signaling to facilitate infection by the fungal pathogen Fusarium graminearum. 9S-lypoxygenase-derived oxylipins activate brassinosteroid signaling to promote cell wall-based defense and limit pathogen infection. Does not seem to contribute to the oxidation of free fatty acids during seed aging. In Arabidopsis thaliana (Mouse-ear cress), this protein is Linoleate 9S-lipoxygenase 5.